The following is a 902-amino-acid chain: Aconitate hydratase A (902 aa).

[4Fe-4S] cluster is bound by residues C441, C507, and C510.

This sequence belongs to the aconitase/IPM isomerase family. As to quaternary structure, monomer. It depends on [4Fe-4S] cluster as a cofactor.

It carries out the reaction citrate = D-threo-isocitrate. It catalyses the reaction (2S,3R)-3-hydroxybutane-1,2,3-tricarboxylate = 2-methyl-cis-aconitate + H2O. It participates in carbohydrate metabolism; tricarboxylic acid cycle; isocitrate from oxaloacetate: step 2/2. Its pathway is organic acid metabolism; propanoate degradation. Functionally, involved in the catabolism of short chain fatty acids (SCFA) via the tricarboxylic acid (TCA)(acetyl degradation route) and probably the 2-methylcitrate cycle I (propionate degradation route). Catalyzes the reversible isomerization of citrate to isocitrate via cis-aconitate. Also able to catalyze the hydration of cis-homoaconitate to yield (R)-homocitrate, but with a lower efficiency. Could catalyze the hydration of 2-methyl-cis-aconitate to yield (2R,3S)-2-methylisocitrate. The apo form of AcnA functions as a RNA-binding regulatory protein. This chain is Aconitate hydratase A (acoA), found in Thermus thermophilus (strain ATCC 27634 / DSM 579 / HB8).